Reading from the N-terminus, the 427-residue chain is Beta-1,3-galactosyl-O-glycosyl-glycoprotein beta-1,6-N-acetylglucosaminyltransferase (427 aa).

Over 1–9 the chain is Cytoplasmic; it reads MLRKLWRRK. A mediates interaction with GOLPH3 and is necessary and sufficient for localization to the Golgi region spans residues 5 to 9; it reads LWRRK. Residues 10-32 traverse the membrane as a helical; Signal-anchor for type II membrane protein segment; that stretch reads LFSFPTKYYFLFLAFSVVTFTVL. The segment at 33–121 is stem region; the sequence is RIHQKTEFVN…EPLSKEEAGF (89 aa). At 33 to 427 the chain is on the lumenal side; sequence RIHQKTEFVN…RHKALETLKP (395 aa). 2 N-linked (GlcNAc...) asparagine glycosylation sites follow: Asn58 and Asn95. Disulfide bonds link Cys59–Cys412, Cys100–Cys172, Cys151–Cys199, and Cys372–Cys380. Residues 122–427 are catalytic; the sequence is PIAYSIVVHH…RHKALETLKP (306 aa). Residues 128 to 130, 155 to 157, and Tyr187 each bind UDP-N-acetyl-alpha-D-glucosamine; these read VVH and DAK. Residues Glu243, Lys251, Arg254, Glu320, Lys341, and Tyr358 each coordinate a glycoprotein. The Nucleophile role is filled by Glu320. UDP-N-acetyl-alpha-D-glucosamine is bound by residues Arg377 and Lys400.

This sequence belongs to the glycosyltransferase 14 family. As to quaternary structure, interacts with GOLPH3; may control GCNT1 retention in the Golgi. As to expression, expressed in tracheal submucosal glands and epithelium (at protein level).

It localises to the golgi apparatus membrane. It catalyses the reaction a 3-O-[beta-D-galactosyl-(1-&gt;3)-N-acetyl-alpha-D-galactosaminyl]-L-seryl-[protein] + UDP-N-acetyl-alpha-D-glucosamine = 3-O-{beta-D-galactosyl-(1-&gt;3)-[N-acetyl-beta-D-glucosaminyl-(1-&gt;6)]-N-acetyl-alpha-D-galactosaminyl}-L-seryl-[protein] + UDP + H(+). The catalysed reaction is a 3-O-[beta-D-galactosyl-(1-&gt;3)-N-acetyl-alpha-D-galactosaminyl]-L-threonyl-[protein] + UDP-N-acetyl-alpha-D-glucosamine = a 3-O-{beta-D-galactosyl-(1-&gt;3)-[N-acetyl-beta-D-glucosaminyl-(1-&gt;6)]-N-acetyl-alpha-D-galactosaminyl}-L-threonyl-[protein] + UDP + H(+). The enzyme catalyses a globoside GalGb4Cer + UDP-N-acetyl-alpha-D-glucosamine = a globoside GlcNAc-(beta1-&gt;6)-GalGb4Cer + UDP + H(+). It carries out the reaction a ganglioside GA1 + UDP-N-acetyl-alpha-D-glucosamine = a ganglioside beta-D-GlcNAc-(1-&gt;6)-GA1 + UDP + H(+). It functions in the pathway protein modification; protein glycosylation. The protein operates within glycolipid biosynthesis. Its function is as follows. Glycosyltransferase that catalyzes the transfer of an N-acetylglucosamine (GlcNAc) moiety in beta1-6 linkage from UDP-GlcNAc onto mucin-type core 1 O-glycan to form the branched mucin-type core 2 O-glycan. The catalysis is metal ion-independent and occurs with inversion of the anomeric configuration of sugar donor. Selectively involved in synthesis of mucin-type core 2 O-glycans that serve as scaffolds for the display of selectin ligand sialyl Lewis X epitope by myeloid cells, with an impact on homeostasis and recruitment to inflammatory sites. Can also act on glycolipid substrates. Transfers GlcNAc moiety to GalGb4Cer globosides in a reaction step to the synthesis of stage-specific embryonic antigen 1 (SSEA-1) determinant. Can use Galbeta1-3GalNAcalpha1- and Galbeta1-3GalNAcbeta1- oligosaccharide derivatives as acceptor substrates. The sequence is that of Beta-1,3-galactosyl-O-glycosyl-glycoprotein beta-1,6-N-acetylglucosaminyltransferase (GCNT1) from Bos taurus (Bovine).